The primary structure comprises 75 residues: Protease B inhibitor 1 (75 aa).

T74 is subject to Phosphothreonine.

This sequence belongs to the protease inhibitor I9 family. In terms of assembly, part of the heterodimeric LMA1 complex together with the thioredoxin II/TRX2. LMA1 binds to the ATPase SEC18.

It localises to the cytoplasm. The protein resides in the nucleus. Cytosolic inhibitor of vacuolar proteinase B (yscB), probably regulating protease B activity during limited proteolysis. PBI2 is a component of the LMA1 complex, which is involved in the facilitation of vesicle fusion such as homotypic vacuole and ER-derived COPII vesicle fusion with the Golgi. The sequence is that of Protease B inhibitor 1 (PBI2) from Saccharomyces cerevisiae (Baker's yeast).